The following is an 838-amino-acid chain: Leucine--tRNA ligase (838 aa).

The 'HIGH' region signature appears at 38–48; it reads PYPSGKAHVGH. Positions 608–612 match the 'KMSKS' region motif; it reads KMSKS. Lys611 contacts ATP.

The protein belongs to the class-I aminoacyl-tRNA synthetase family.

The protein resides in the cytoplasm. The catalysed reaction is tRNA(Leu) + L-leucine + ATP = L-leucyl-tRNA(Leu) + AMP + diphosphate. The chain is Leucine--tRNA ligase from Orientia tsutsugamushi (strain Boryong) (Rickettsia tsutsugamushi).